The chain runs to 119 residues: Ribonuclease P protein component (119 aa).

This sequence belongs to the RnpA family. Consists of a catalytic RNA component (M1 or rnpB) and a protein subunit.

The catalysed reaction is Endonucleolytic cleavage of RNA, removing 5'-extranucleotides from tRNA precursor.. In terms of biological role, RNaseP catalyzes the removal of the 5'-leader sequence from pre-tRNA to produce the mature 5'-terminus. It can also cleave other RNA substrates such as 4.5S RNA. The protein component plays an auxiliary but essential role in vivo by binding to the 5'-leader sequence and broadening the substrate specificity of the ribozyme. This Pediococcus pentosaceus (strain ATCC 25745 / CCUG 21536 / LMG 10740 / 183-1w) protein is Ribonuclease P protein component.